A 118-amino-acid chain; its full sequence is Non-specific lipid-transfer protein 1 (118 aa).

Residues 1–25 form the signal peptide; sequence MAGVMKLACLLLACMIVAGPITSNA. 4 disulfides stabilise this stretch: Cys-29-Cys-76, Cys-39-Cys-53, Cys-54-Cys-100, and Cys-74-Cys-114.

It belongs to the plant LTP family. Expressed primarily in epidermal cells.

It is found in the secreted. Its subcellular location is the cell wall. In terms of biological role, plant non-specific lipid-transfer proteins transfer phospholipids as well as galactolipids across membranes. May play a role in wax or cutin deposition in the cell walls of expanding epidermal cells and certain secretory tissues. The protein is Non-specific lipid-transfer protein 1 (LTP1) of Arabidopsis thaliana (Mouse-ear cress).